The chain runs to 416 residues: Xyloglucan O-acetyltransferase 1 (416 aa).

The Cytoplasmic segment spans residues 1 to 14 (MGLNEQQNVPSQRK). The helical; Signal-anchor for type II membrane protein transmembrane segment at 15–35 (IIVFIVLAFIPIALFRLCFNN) threads the bilayer. Residues 36 to 416 (PFSSIKDTSL…MIEMLRRWKV (381 aa)) are Lumenal-facing. 4 disulfides stabilise this stretch: Cys-79–Cys-129, Cys-100–Cys-165, Cys-109–Cys-395, and Cys-318–Cys-391. The N-linked (GlcNAc...) asparagine glycan is linked to Asn-96. Residues 152 to 154 (GDS) carry the GDS motif motif. The active-site Nucleophile is the Ser-154. N-linked (GlcNAc...) asparagine glycosylation is found at Asn-194, Asn-269, and Asn-319. Asp-390 serves as the catalytic Proton donor. The DXXH motif motif lies at 390–393 (DCLH). His-393 serves as the catalytic Proton acceptor.

Belongs to the PC-esterase family. TBL subfamily.

The protein resides in the golgi apparatus membrane. Functionally, xyloglucan acetyltransferase that catalyzes the acetylation of fucosylated Gal residues on xyloglucan side chains. Predominantly catalyze 6-O-monoacetylation of Gal residues in the Fuc-Gal-Xyl trisaccharide side chains of xyloglucan oligomers. Involved in xyloglucan specific O-acetylation in roots and rosette leaves. The chain is Xyloglucan O-acetyltransferase 1 from Arabidopsis thaliana (Mouse-ear cress).